The chain runs to 629 residues: tRNA uridine 5-carboxymethylaminomethyl modification enzyme MnmG (629 aa).

Position 13–18 (13–18 (GGGHAG)) interacts with FAD. 273–287 (GPRYCPSIEDKIHRF) lines the NAD(+) pocket.

Belongs to the MnmG family. As to quaternary structure, homodimer. Heterotetramer of two MnmE and two MnmG subunits. FAD serves as cofactor.

The protein localises to the cytoplasm. Its function is as follows. NAD-binding protein involved in the addition of a carboxymethylaminomethyl (cmnm) group at the wobble position (U34) of certain tRNAs, forming tRNA-cmnm(5)s(2)U34. In Shewanella amazonensis (strain ATCC BAA-1098 / SB2B), this protein is tRNA uridine 5-carboxymethylaminomethyl modification enzyme MnmG.